We begin with the raw amino-acid sequence, 95 residues long: Aspartyl/glutamyl-tRNA(Asn/Gln) amidotransferase subunit C (95 aa).

The protein belongs to the GatC family. In terms of assembly, heterotrimer of A, B and C subunits.

The enzyme catalyses L-glutamyl-tRNA(Gln) + L-glutamine + ATP + H2O = L-glutaminyl-tRNA(Gln) + L-glutamate + ADP + phosphate + H(+). It catalyses the reaction L-aspartyl-tRNA(Asn) + L-glutamine + ATP + H2O = L-asparaginyl-tRNA(Asn) + L-glutamate + ADP + phosphate + 2 H(+). In terms of biological role, allows the formation of correctly charged Asn-tRNA(Asn) or Gln-tRNA(Gln) through the transamidation of misacylated Asp-tRNA(Asn) or Glu-tRNA(Gln) in organisms which lack either or both of asparaginyl-tRNA or glutaminyl-tRNA synthetases. The reaction takes place in the presence of glutamine and ATP through an activated phospho-Asp-tRNA(Asn) or phospho-Glu-tRNA(Gln). The chain is Aspartyl/glutamyl-tRNA(Asn/Gln) amidotransferase subunit C from Laribacter hongkongensis (strain HLHK9).